We begin with the raw amino-acid sequence, 542 residues long: Sialate O-acetylesterase (542 aa).

The signal sequence occupies residues 1–23 (MVSPRPVGLMLLLIIARVSRGAG). N-linked (GlcNAc...) asparagine glycans are attached at residues asparagine 107, asparagine 138, asparagine 188, asparagine 294, asparagine 357, asparagine 428, asparagine 449, and asparagine 463.

Disulfide-linked heterodimer of a small subunit and a large subunit. In terms of processing, the two subunits are derived from a single precursor by proteolytic cleavage. Glycosylated. As to expression, widely expressed.

It localises to the lysosome. It carries out the reaction N-acetyl-9-O-acetylneuraminate + H2O = N-acetylneuraminate + acetate + H(+). The catalysed reaction is an Ac-O-9-sialoglycoconjugate + H2O = a sialoglycoconjugate + acetate + H(+). With respect to regulation, inhibited by diisopropyl fluorophosphate and diethyl-P-nitrophenyl phosphate. Functionally, catalyzes the removal of O-acetyl ester groups from position 9 of the free diacetylated sialate N-acetyl-9-O-acetylneuraminate (Neu5,9Ac2) in the cytosol and of the diacetylated sialate residues of sialylglycoconjugates in the lysosomes. Together with the sialate-O-acetyltransferase they regulate the balance of acetylated sialoglycoconjugates, key players in various processes such as cell-cell interactions, host-pathogen recognition, and tumor antigenicity. This Rattus norvegicus (Rat) protein is Sialate O-acetylesterase (Siae).